The sequence spans 87 residues: UPF0250 protein BUsg_472 (87 aa).

It belongs to the UPF0250 family.

This chain is UPF0250 protein BUsg_472, found in Buchnera aphidicola subsp. Schizaphis graminum (strain Sg).